The sequence spans 145 residues: Bacilliredoxin SERP1006 (145 aa).

Belongs to the bacilliredoxin family.

This is Bacilliredoxin SERP1006 from Staphylococcus epidermidis (strain ATCC 35984 / DSM 28319 / BCRC 17069 / CCUG 31568 / BM 3577 / RP62A).